Reading from the N-terminus, the 51-residue chain is ATP synthase F(1) complex subunit epsilon, mitochondrial (51 aa).

N6-acetyllysine; alternate occurs at positions 21, 32, and 37. An N6-succinyllysine; alternate mark is found at Lys21, Lys32, and Lys37. Position 44 is an N6-acetyllysine (Lys44).

It belongs to the eukaryotic ATPase epsilon family. As to quaternary structure, component of the ATP synthase complex composed at least of ATP5F1A/subunit alpha, ATP5F1B/subunit beta, ATP5MC1/subunit c (homooctomer), MT-ATP6/subunit a, MT-ATP8/subunit 8, ATP5ME/subunit e, ATP5MF/subunit f, ATP5MG/subunit g, ATP5MK/subunit k, ATP5MJ/subunit j, ATP5F1C/subunit gamma, ATP5F1D/subunit delta, ATP5F1E/subunit epsilon, ATP5PF/subunit F6, ATP5PB/subunit b, ATP5PD/subunit d, ATP5PO/subunit OSCP. ATP synthase complex consists of a soluble F(1) head domain (subunits alpha(3) and beta(3)) - the catalytic core - and a membrane F(0) domain - the membrane proton channel (subunits c, a, 8, e, f, g, k and j). These two domains are linked by a central stalk (subunits gamma, delta, and epsilon) rotating inside the F1 region and a stationary peripheral stalk (subunits F6, b, d, and OSCP).

The protein localises to the mitochondrion. Its subcellular location is the mitochondrion inner membrane. Its function is as follows. Subunit epsilon, of the mitochondrial membrane ATP synthase complex (F(1)F(0) ATP synthase or Complex V) that produces ATP from ADP in the presence of a proton gradient across the membrane which is generated by electron transport complexes of the respiratory chain. ATP synthase complex consist of a soluble F(1) head domain - the catalytic core - and a membrane F(1) domain - the membrane proton channel. These two domains are linked by a central stalk rotating inside the F(1) region and a stationary peripheral stalk. During catalysis, ATP synthesis in the catalytic domain of F(1) is coupled via a rotary mechanism of the central stalk subunits to proton translocation. In vivo, can only synthesize ATP although its ATP hydrolase activity can be activated artificially in vitro. May be essential for the assembly of F(1) and may play an important role in the incorporation of the hydrophobic subunit c into the F(1)-c oligomer rotor of the mitochondrial ATP synthase complex. The chain is ATP synthase F(1) complex subunit epsilon, mitochondrial from Bos taurus (Bovine).